Reading from the N-terminus, the 263-residue chain is Esterase mokD (263 aa).

Active-site charge relay system residues include Ser134, Asp208, and His236.

Belongs to the LovG family.

The catalysed reaction is dihydromonacolin L-[lovastatin nonaketide synthase] + H2O = holo-[lovastatin nonaketide synthase] + dihydromonacolin L carboxylate + H(+). The protein operates within polyketide biosynthesis; lovastatin biosynthesis. Functionally, esterase; part of the gene cluster that mediates the biosynthesis of monakolin K, also known as lovastatin, and which acts as a potent competitive inhibitor of HMG-CoA reductase. Monakolin K biosynthesis is performed in two stages. The first stage is catalyzed by the nonaketide synthase mokA, which belongs to type I polyketide synthases and catalyzes the iterative nine-step formation of the polyketide. This PKS stage completed by the action of dehydrogenase mokE, which catalyzes the NADPH-dependent reduction of the unsaturated tetra-, penta- and heptaketide intermediates that arise during the mokA-mediated biosynthesis of the nonaketide chain and leads to dihydromonacolin L. Covalently bound dihydromonacolin L is released from mokA by the mokD esterase. Conversion of dihydromonacolin L into monacolin L and then monacolin J is subsequently performed with the participation of molecular oxygen and P450 monoogygenase mokC. Finally, mokF performs the conversion of monacoline J to monacoline K through the addition of the side-chain diketide moiety (2R)-2-methylbutanoate produced by the diketide synthase mokB. The sequence is that of Esterase mokD from Monascus pilosus (Red mold).